The following is a 461-amino-acid chain: Carboxypeptidase Rv3627c (461 aa).

The N-terminal stretch at 1-28 (MGPTRWRKSTHVVVGAAVLAFVAVVVAA) is a signal peptide. The active-site Acyl-ester intermediate is the Ser114. Lys117 serves as the catalytic Proton acceptor. The active site involves Ser295.

It belongs to the peptidase S13 family.

Carboxypeptidase that cleaves terminal D-alanine from peptidoglycan in the mycobacterial cell wall. May cleave L-Lys-D-Ala and/or D-Ala-D-Ala peptide bonds. Exerts important effects on mycobacterial cell morphology and cell division. The protein is Carboxypeptidase Rv3627c of Mycobacterium tuberculosis (strain ATCC 25618 / H37Rv).